Reading from the N-terminus, the 351-residue chain is Dihydroorotate dehydrogenase (quinone) (351 aa).

FMN is bound by residues 61-65 and Thr85; that span reads AGLDK. Lys65 serves as a coordination point for substrate. Residue 110–114 participates in substrate binding; it reads NRMGF. The FMN site is built by Asn139 and Asn172. Residue Asn172 coordinates substrate. The active-site Nucleophile is the Ser175. Asn177 lines the substrate pocket. FMN is bound by residues Lys217 and Thr245. Residue 246 to 247 coordinates substrate; sequence NT. FMN-binding positions include Gly268, Gly297, and 318–319; that span reads YS.

It belongs to the dihydroorotate dehydrogenase family. Type 2 subfamily. In terms of assembly, monomer. The cofactor is FMN.

It localises to the cell membrane. The catalysed reaction is (S)-dihydroorotate + a quinone = orotate + a quinol. The protein operates within pyrimidine metabolism; UMP biosynthesis via de novo pathway; orotate from (S)-dihydroorotate (quinone route): step 1/1. Functionally, catalyzes the conversion of dihydroorotate to orotate with quinone as electron acceptor. The chain is Dihydroorotate dehydrogenase (quinone) from Xanthomonas campestris pv. campestris (strain 8004).